Reading from the N-terminus, the 247-residue chain is Small ribosomal subunit protein uS2 (247 aa).

This sequence belongs to the universal ribosomal protein uS2 family.

The polypeptide is Small ribosomal subunit protein uS2 (Cupriavidus metallidurans (strain ATCC 43123 / DSM 2839 / NBRC 102507 / CH34) (Ralstonia metallidurans)).